Reading from the N-terminus, the 347-residue chain is Very-long-chain 3-oxoacyl-CoA reductase (347 aa).

The helical transmembrane segment at 20-40 (LLWVVFGLGVLKCTTLSLRFL) threads the bilayer. Residues Asp-120, Asn-147, Tyr-223, Lys-227, Val-256, and Ser-258 each contribute to the NADP(+) site. Tyr-223 acts as the Proton donor in catalysis. The active-site Lowers pKa of active site Tyr is Lys-227.

Belongs to the short-chain dehydrogenases/reductases (SDR) family. As to quaternary structure, interacts with the fatty acid elongation system components ELO3 and TSC13.

It localises to the endoplasmic reticulum membrane. The enzyme catalyses a very-long-chain (3R)-3-hydroxyacyl-CoA + NADP(+) = a very-long-chain 3-oxoacyl-CoA + NADPH + H(+). The catalysed reaction is 3-oxooctadecanoyl-CoA + NADPH + H(+) = (3R)-hydroxyoctadecanoyl-CoA + NADP(+). It catalyses the reaction 3-oxoeicosanoyl-CoA + NADPH + H(+) = (3R)-hydroxyeicosanoyl-CoA + NADP(+). It carries out the reaction 3-oxodocosanoyl-CoA + NADPH + H(+) = (3R)-hydroxydocosanoyl-CoA + NADP(+). The enzyme catalyses 3-oxotetracosanoyl-CoA + NADPH + H(+) = (3R)-hydroxytetracosanoyl-CoA + NADP(+). The catalysed reaction is 3-oxohexacosanoyl-CoA + NADPH + H(+) = (3R)-hydroxyhexacosanoyl-CoA + NADP(+). It functions in the pathway lipid metabolism; fatty acid biosynthesis. In terms of biological role, component of the microsomal membrane bound fatty acid elongation system, which produces the 26-carbon very long-chain fatty acids (VLCFA) from palmitate. Catalyzes the reduction of the 3-ketoacyl-CoA intermediate that is formed in each cycle of fatty acid elongation. VLCFAs serve as precursors for ceramide and sphingolipids. The polypeptide is Very-long-chain 3-oxoacyl-CoA reductase (IFA38) (Saccharomyces cerevisiae (strain ATCC 204508 / S288c) (Baker's yeast)).